The chain runs to 465 residues: Hydroxyacid-oxoacid transhydrogenase, mitochondrial (465 aa).

Lys-443 is modified (N6-acetyllysine). Ser-450 bears the Phosphoserine mark.

This sequence belongs to the iron-containing alcohol dehydrogenase family. Hydroxyacid-oxoacid transhydrogenase subfamily. Expressed in white and brown adipose tissues, liver, and kidney. Expression is differentiation-dependent during in vitro brown and white adipogenesis.

The protein resides in the mitochondrion. It carries out the reaction (S)-3-hydroxybutanoate + 2-oxoglutarate = (R)-2-hydroxyglutarate + acetoacetate. It catalyses the reaction 4-hydroxybutanoate + 2-oxoglutarate = (R)-2-hydroxyglutarate + succinate semialdehyde. In terms of biological role, catalyzes the cofactor-independent reversible oxidation of gamma-hydroxybutyrate (GHB) to succinic semialdehyde (SSA) coupled to reduction of 2-ketoglutarate (2-KG) to D-2-hydroxyglutarate (D-2-HG). L-3-hydroxybutyrate (L-3-OHB) is also a substrate for HOT when using 2-KG as hydrogen acceptor, resulting in the formation of D-2-HG. This chain is Hydroxyacid-oxoacid transhydrogenase, mitochondrial (Adhfe1), found in Mus musculus (Mouse).